Here is a 538-residue protein sequence, read N- to C-terminus: CWF19-like protein 1 (538 aa).

Disordered regions lie at residues 259–278 and 298–324; these read PDVT…TGKQ and QGRK…PPQP.

This sequence belongs to the CWF19 family.

The protein is CWF19-like protein 1 (CWF19L1) of Pongo abelii (Sumatran orangutan).